The following is a 261-amino-acid chain: Transcription repressor OFP15 (261 aa).

The interval 1–28 (MKLPFLNKNHSTSSYSSNSSSSSWPWPS) is disordered. Low complexity predominate over residues 11–28 (STSSYSSNSSSSSWPWPS). The OVATE domain occupies 112–172 (FSLESDDPYS…FAAFVDLLMN (61 aa)).

In terms of assembly, interacts with BLH1 and BLH3. As to expression, expressed in roots, cauline leaves, shoots, flower buds and siliques.

It localises to the nucleus. Its function is as follows. Transcriptional repressor that regulates multiple aspects of plant growth and development through the regulation of BEL1-LIKE (BLH) and KNOX TALE (KNAT) homeodomain transcription factors. The polypeptide is Transcription repressor OFP15 (OFP15) (Arabidopsis thaliana (Mouse-ear cress)).